The following is a 433-amino-acid chain: Chaperone SurA (433 aa).

Residues 1–24 (MKYRIKALLLASSLIITTITSVQA) form the signal peptide. PpiC domains follow at residues 175-276 (NVEY…KVLD) and 285-384 (VEEV…KLED).

It is found in the periplasm. The catalysed reaction is [protein]-peptidylproline (omega=180) = [protein]-peptidylproline (omega=0). In terms of biological role, chaperone involved in the correct folding and assembly of outer membrane proteins. Recognizes specific patterns of aromatic residues and the orientation of their side chains, which are found more frequently in integral outer membrane proteins. May act in both early periplasmic and late outer membrane-associated steps of protein maturation. In Colwellia psychrerythraea (strain 34H / ATCC BAA-681) (Vibrio psychroerythus), this protein is Chaperone SurA.